Consider the following 104-residue polypeptide: Iron-sulfur cluster assembly protein CyaY (104 aa).

It belongs to the frataxin family.

Involved in iron-sulfur (Fe-S) cluster assembly. May act as a regulator of Fe-S biogenesis. The polypeptide is Iron-sulfur cluster assembly protein CyaY (Vibrio cholerae serotype O1 (strain ATCC 39541 / Classical Ogawa 395 / O395)).